The sequence spans 291 residues: Flavonol synthase/flavanone 3-hydroxylase (291 aa).

The 100-residue stretch at 151 to 250 (CWYVMNINHY…RMSWPVLVSP (100 aa)) folds into the Fe2OG dioxygenase domain. 3 residues coordinate Fe cation: H175, D177, and H231.

It belongs to the iron/ascorbate-dependent oxidoreductase family. It depends on L-ascorbate as a cofactor. The cofactor is Fe cation.

The protein localises to the cytoplasm. The catalysed reaction is a (2R,3R)-dihydroflavonol + 2-oxoglutarate + O2 = a flavonol + succinate + CO2 + H2O. It carries out the reaction a (2S)-flavan-4-one + 2-oxoglutarate + O2 = a (2R,3R)-dihydroflavonol + succinate + CO2. It functions in the pathway secondary metabolite biosynthesis; flavonoid biosynthesis. Catalyzes the formation of flavonols from dihydroflavonols. It can act on dihydrokaempferol to produce kaempferol, on dihydroquercetin to produce quercitin and on dihydromyricetin to produce myricetin. The chain is Flavonol synthase/flavanone 3-hydroxylase from Matthiola incana (Common stock).